The primary structure comprises 167 residues: MAPINPDLQNVQDDIKNVIQDLFQVLVQVSNYDAAGRPTRDVLAQDIQTLDKTLHTLHTNAQHLPTPTADKPIPEPLIQYVENGRNPDIYTREFAELVRRMNQLARGKMHAFRDFRDVLAREMESALPELRADVQMVVGATGGRTVGGEGEGAGQGEGGEGRGEGGN.

Positions 141–158 (TGGRTVGGEGEGAGQGEG) are enriched in gly residues. The segment at 141–167 (TGGRTVGGEGEGAGQGEGGEGRGEGGN) is disordered.

It belongs to the Mediator complex subunit 10 family. As to quaternary structure, component of the Mediator complex.

The protein resides in the nucleus. Its function is as follows. Component of the Mediator complex, a coactivator involved in the regulated transcription of nearly all RNA polymerase II-dependent genes. Mediator functions as a bridge to convey information from gene-specific regulatory proteins to the basal RNA polymerase II transcription machinery. Mediator is recruited to promoters by direct interactions with regulatory proteins and serves as a scaffold for the assembly of a functional preinitiation complex with RNA polymerase II and the general transcription factors. The chain is Mediator of RNA polymerase II transcription subunit 10 (NUT2) from Chaetomium globosum (strain ATCC 6205 / CBS 148.51 / DSM 1962 / NBRC 6347 / NRRL 1970) (Soil fungus).